A 420-amino-acid polypeptide reads, in one-letter code: 5'-deoxyadenosine deaminase (420 aa).

His-55 and His-57 together coordinate Zn(2+). Residues Glu-84 and His-176 each contribute to the substrate site. His-203 provides a ligand contact to Zn(2+). 2 residues coordinate substrate: Glu-206 and Asp-292. Asp-292 is a Zn(2+) binding site.

The protein belongs to the metallo-dependent hydrolases superfamily. MTA/SAH deaminase family. In terms of assembly, homotetramer. Zn(2+) is required as a cofactor.

The catalysed reaction is 5'-deoxyadenosine + H2O + H(+) = 5'-deoxyinosine + NH4(+). The enzyme catalyses S-adenosyl-L-homocysteine + H2O + H(+) = S-inosyl-L-homocysteine + NH4(+). It carries out the reaction S-methyl-5'-thioadenosine + H2O + H(+) = S-methyl-5'-thioinosine + NH4(+). It catalyses the reaction adenosine + H2O + H(+) = inosine + NH4(+). It functions in the pathway amino-acid biosynthesis; S-adenosyl-L-methionine biosynthesis. Catalyzes the deamination of three SAM-derived enzymatic products, namely 5'-deoxyadenosine, S-adenosyl-L-homocysteine, and 5'-methylthioadenosine, to produce the inosine analogs. Can also deaminate adenosine. The preferred substrate for this enzyme is 5'-deoxyadenosine, but all these substrates are efficiently deaminated. Likely functions in a S-adenosyl-L-methionine (SAM) recycling pathway from S-adenosyl-L-homocysteine (SAH) produced from SAM-dependent methylation reactions. May also be involved in the recycling of 5'-deoxyadenosine, whereupon the 5'-deoxyribose moiety of 5'-deoxyinosine is further metabolized to deoxyhexoses used for the biosynthesis of aromatic amino acids in methanogens. The polypeptide is 5'-deoxyadenosine deaminase (Methanocaldococcus jannaschii (strain ATCC 43067 / DSM 2661 / JAL-1 / JCM 10045 / NBRC 100440) (Methanococcus jannaschii)).